The following is a 376-amino-acid chain: Homocitrate synthase (376 aa).

Residues 4-259 (WKIIDSTLRE…RRKYKLEMLP (256 aa)) enclose the Pyruvate carboxyltransferase domain. A 2-oxoglutarate-binding site is contributed by arginine 12. Glutamate 13 lines the Mg(2+) pocket. Histidine 72 is a binding site for 2-oxoglutarate. Aspartate 92 serves as a coordination point for L-lysine. Residue arginine 133 participates in 2-oxoglutarate binding. Positions 135 and 166 each coordinate L-lysine. Threonine 166 provides a ligand contact to 2-oxoglutarate. Mg(2+) is bound by residues histidine 195 and histidine 197. The active-site Proton acceptor is histidine 292.

Belongs to the alpha-IPM synthase/homocitrate synthase family. Homocitrate synthase LYS20/LYS21 subfamily. In terms of assembly, exists in an equilibrium between monomer and homodimer. It depends on Mg(2+) as a cofactor. Requires Mn(2+) as cofactor.

The protein localises to the cytoplasm. It carries out the reaction acetyl-CoA + 2-oxoglutarate + H2O = (2R)-homocitrate + CoA + H(+). It catalyses the reaction oxaloacetate + acetyl-CoA + H2O = citrate + CoA + H(+). It functions in the pathway amino-acid biosynthesis; L-lysine biosynthesis via AAA pathway; L-alpha-aminoadipate from 2-oxoglutarate: step 1/5. Is highly and competitively inhibited by lysine that binds to the active site and competes with 2-oxoglutarate. Is also slightly inhibited by arginine and 2-aminoethylcysteine. Catalyzes the aldol-type condensation of 2-oxoglutarate with acetyl-CoA to yield homocitrate. Carries out the first step of the alpha-aminoadipate (AAA) lysine biosynthesis pathway. To a lesser extent, can also use oxaloacetate in place of 2-oxoglutarate, leading to citrate. Does not display 2-isopropylmalate synthase activity since it cannot use 2-oxoisovalerate. This is Homocitrate synthase from Thermus thermophilus (strain ATCC BAA-163 / DSM 7039 / HB27).